The primary structure comprises 376 residues: Alanine racemase (376 aa).

The active-site Proton acceptor; specific for D-alanine is the Lys40. The residue at position 40 (Lys40) is an N6-(pyridoxal phosphate)lysine. Residue Arg138 coordinates substrate. Tyr270 serves as the catalytic Proton acceptor; specific for L-alanine. Residue Met317 participates in substrate binding.

This sequence belongs to the alanine racemase family. Requires pyridoxal 5'-phosphate as cofactor.

The enzyme catalyses L-alanine = D-alanine. It participates in amino-acid biosynthesis; D-alanine biosynthesis; D-alanine from L-alanine: step 1/1. Catalyzes the interconversion of L-alanine and D-alanine. May also act on other amino acids. This Lactobacillus delbrueckii subsp. bulgaricus (strain ATCC 11842 / DSM 20081 / BCRC 10696 / JCM 1002 / NBRC 13953 / NCIMB 11778 / NCTC 12712 / WDCM 00102 / Lb 14) protein is Alanine racemase (alr).